We begin with the raw amino-acid sequence, 320 residues long: Lipoyl synthase (320 aa).

C67, C72, C78, C93, C97, C100, and S307 together coordinate [4Fe-4S] cluster. Residues F79–E296 enclose the Radical SAM core domain.

It belongs to the radical SAM superfamily. Lipoyl synthase family. Requires [4Fe-4S] cluster as cofactor.

The protein resides in the cytoplasm. The catalysed reaction is [[Fe-S] cluster scaffold protein carrying a second [4Fe-4S](2+) cluster] + N(6)-octanoyl-L-lysyl-[protein] + 2 oxidized [2Fe-2S]-[ferredoxin] + 2 S-adenosyl-L-methionine + 4 H(+) = [[Fe-S] cluster scaffold protein] + N(6)-[(R)-dihydrolipoyl]-L-lysyl-[protein] + 4 Fe(3+) + 2 hydrogen sulfide + 2 5'-deoxyadenosine + 2 L-methionine + 2 reduced [2Fe-2S]-[ferredoxin]. The protein operates within protein modification; protein lipoylation via endogenous pathway; protein N(6)-(lipoyl)lysine from octanoyl-[acyl-carrier-protein]: step 2/2. Catalyzes the radical-mediated insertion of two sulfur atoms into the C-6 and C-8 positions of the octanoyl moiety bound to the lipoyl domains of lipoate-dependent enzymes, thereby converting the octanoylated domains into lipoylated derivatives. This Mannheimia succiniciproducens (strain KCTC 0769BP / MBEL55E) protein is Lipoyl synthase.